A 681-amino-acid polypeptide reads, in one-letter code: Proline-rich receptor-like protein kinase PERK8 (681 aa).

Residues 1-11 (MSLVPPLPILS) are compositionally biased toward pro residues. The interval 1–231 (MSLVPPLPIL…TLPSSSPGKS (231 aa)) is disordered. Topologically, residues 1-237 (MSLVPPLPIL…PGKSEVGTGG (237 aa)) are extracellular. N16 is a glycosylation site (N-linked (GlcNAc...) asparagine). Residues 21–163 (APPPLQTQPT…SPPKPSPSTP (143 aa)) show a composition bias toward pro residues. A compositionally biased stretch (low complexity) spans 177–191 (TSASPPSSNPTDPST). Over residues 192–201 (LAPPPTPLPV) the composition is skewed to pro residues. The segment covering 214–229 (PASNNGNNTLPSSSPG) has biased composition (polar residues). N220 carries an N-linked (GlcNAc...) asparagine glycan. Residues 238 to 258 (IVAIGVIVGLVFLSLFVMGVW) traverse the membrane as a helical segment. Residues 259-681 (FTRKRKRKDP…GSRDQSRFVP (423 aa)) lie on the Cytoplasmic side of the membrane. Positions 339-617 (FSEKNLLGEG…SQVVRALDTL (279 aa)) constitute a Protein kinase domain. ATP contacts are provided by residues 345 to 353 (LGEGGFGCV) and K367. Y412 bears the Phosphotyrosine mark. The active-site Proton acceptor is D463. Phosphoserine is present on residues S467 and S498. 2 positions are modified to phosphothreonine: T499 and T504. Y512 carries the phosphotyrosine modification.

This sequence belongs to the protein kinase superfamily. Ser/Thr protein kinase family. In terms of assembly, interacts with KIPK1 and KIPK2 (via its cytosolic domain). As to expression, mostly expressed in seedlings, roots, inflorescence bolts and flower buds.

The protein resides in the cell membrane. The enzyme catalyses L-seryl-[protein] + ATP = O-phospho-L-seryl-[protein] + ADP + H(+). The catalysed reaction is L-threonyl-[protein] + ATP = O-phospho-L-threonyl-[protein] + ADP + H(+). Its function is as follows. Could be involved in the negative regulation of root growth. This Arabidopsis thaliana (Mouse-ear cress) protein is Proline-rich receptor-like protein kinase PERK8 (PERK8).